The primary structure comprises 245 residues: Adenosylcobinamide-GDP ribazoletransferase (245 aa).

The next 5 helical transmembrane spans lie at 31–51 (FGRA…VLYG), 61–81 (PLLQ…ALHL), 113–133 (AAVV…AALL), 138–158 (PGLL…LFLT), and 192–212 (LAFG…FAWL).

The protein belongs to the CobS family. Requires Mg(2+) as cofactor.

The protein localises to the cell inner membrane. The catalysed reaction is alpha-ribazole + adenosylcob(III)inamide-GDP = adenosylcob(III)alamin + GMP + H(+). It carries out the reaction alpha-ribazole 5'-phosphate + adenosylcob(III)inamide-GDP = adenosylcob(III)alamin 5'-phosphate + GMP + H(+). It functions in the pathway cofactor biosynthesis; adenosylcobalamin biosynthesis; adenosylcobalamin from cob(II)yrinate a,c-diamide: step 7/7. In terms of biological role, joins adenosylcobinamide-GDP and alpha-ribazole to generate adenosylcobalamin (Ado-cobalamin). Also synthesizes adenosylcobalamin 5'-phosphate from adenosylcobinamide-GDP and alpha-ribazole 5'-phosphate. The chain is Adenosylcobinamide-GDP ribazoletransferase from Pseudomonas paraeruginosa (strain DSM 24068 / PA7) (Pseudomonas aeruginosa (strain PA7)).